The chain runs to 370 residues: NADH-quinone oxidoreductase subunit D (370 aa).

The protein belongs to the complex I 49 kDa subunit family. As to quaternary structure, NDH-1 is composed of 14 different subunits. Subunits NuoB, C, D, E, F, and G constitute the peripheral sector of the complex.

It is found in the cell membrane. It catalyses the reaction a quinone + NADH + 5 H(+)(in) = a quinol + NAD(+) + 4 H(+)(out). In terms of biological role, NDH-1 shuttles electrons from NADH, via FMN and iron-sulfur (Fe-S) centers, to quinones in the respiratory chain. The immediate electron acceptor for the enzyme in this species is believed to be a menaquinone. Couples the redox reaction to proton translocation (for every two electrons transferred, four hydrogen ions are translocated across the cytoplasmic membrane), and thus conserves the redox energy in a proton gradient. The protein is NADH-quinone oxidoreductase subunit D of Clostridium beijerinckii (strain ATCC 51743 / NCIMB 8052) (Clostridium acetobutylicum).